The primary structure comprises 262 residues: Phosphonates import ATP-binding protein PhnC (262 aa).

Residues isoleucine 5–asparagine 253 enclose the ABC transporter domain. Residue glycine 37–serine 44 coordinates ATP.

It belongs to the ABC transporter superfamily. Phosphonates importer (TC 3.A.1.9.1) family. As to quaternary structure, the complex is composed of two ATP-binding proteins (PhnC), two transmembrane proteins (PhnE) and a solute-binding protein (PhnD).

It localises to the cell inner membrane. The catalysed reaction is phosphonate(out) + ATP + H2O = phosphonate(in) + ADP + phosphate + H(+). Functionally, part of the ABC transporter complex PhnCDE involved in phosphonates, phosphate esters, phosphite and phosphate import. Responsible for energy coupling to the transport system. This Escherichia coli (strain K12) protein is Phosphonates import ATP-binding protein PhnC.